Reading from the N-terminus, the 71-residue chain is Protein Tlp homolog (71 aa).

The disordered stretch occupies residues 30–56 (ETLQNNSLSRDQRQAIMEKNKRREESI). Residues 39–56 (RDQRQAIMEKNKRREESI) show a composition bias toward basic and acidic residues.

The protein belongs to the Tlp family.

The sequence is that of Protein Tlp homolog from Desulforamulus reducens (strain ATCC BAA-1160 / DSM 100696 / MI-1) (Desulfotomaculum reducens).